The sequence spans 378 residues: Bifunctional enzyme IspD/IspF (378 aa).

The 2-C-methyl-D-erythritol 4-phosphate cytidylyltransferase stretch occupies residues 1 to 222; it reads MTETVAIIVA…RLLSPTGAPR (222 aa). Residues 222 to 378 are 2-C-methyl-D-erythritol 2,4-cyclodiphosphate synthase; sequence RIGKGYDVHE…EAVALLMPKG (157 aa). Residues Asp-228 and His-230 each coordinate a divalent metal cation. 4-CDP-2-C-methyl-D-erythritol 2-phosphate-binding positions include 228 to 230 and 254 to 255; these read DVH and HS. An a divalent metal cation-binding site is contributed by His-262. 4-CDP-2-C-methyl-D-erythritol 2-phosphate contacts are provided by residues 276 to 278, 352 to 355, Phe-359, and Arg-362; these read DIG and TTTE.

This sequence in the N-terminal section; belongs to the IspD/TarI cytidylyltransferase family. IspD subfamily. In the C-terminal section; belongs to the IspF family. The cofactor is a divalent metal cation.

The enzyme catalyses 2-C-methyl-D-erythritol 4-phosphate + CTP + H(+) = 4-CDP-2-C-methyl-D-erythritol + diphosphate. The catalysed reaction is 4-CDP-2-C-methyl-D-erythritol 2-phosphate = 2-C-methyl-D-erythritol 2,4-cyclic diphosphate + CMP. The protein operates within isoprenoid biosynthesis; isopentenyl diphosphate biosynthesis via DXP pathway; isopentenyl diphosphate from 1-deoxy-D-xylulose 5-phosphate: step 2/6. Its pathway is isoprenoid biosynthesis; isopentenyl diphosphate biosynthesis via DXP pathway; isopentenyl diphosphate from 1-deoxy-D-xylulose 5-phosphate: step 4/6. In terms of biological role, bifunctional enzyme that catalyzes the formation of 4-diphosphocytidyl-2-C-methyl-D-erythritol from CTP and 2-C-methyl-D-erythritol 4-phosphate (MEP) (IspD), and catalyzes the conversion of 4-diphosphocytidyl-2-C-methyl-D-erythritol 2-phosphate (CDP-ME2P) to 2-C-methyl-D-erythritol 2,4-cyclodiphosphate (ME-CPP) with a corresponding release of cytidine 5-monophosphate (CMP) (IspF). The sequence is that of Bifunctional enzyme IspD/IspF from Hyphomonas neptunium (strain ATCC 15444).